Here is a 233-residue protein sequence, read N- to C-terminus: uncharacterized protein (233 aa).

Belongs to the asfivirus H233R family.

This is an uncharacterized protein from African swine fever virus (isolate Tick/Malawi/Lil 20-1/1983) (ASFV).